Consider the following 303-residue polypeptide: Pyridoxal 5'-phosphate synthase subunit PdxS (303 aa).

Asp33 is a binding site for D-ribose 5-phosphate. The active-site Schiff-base intermediate with D-ribose 5-phosphate is the Lys90. Gly162 serves as a coordination point for D-ribose 5-phosphate. Arg174 contacts D-glyceraldehyde 3-phosphate. D-ribose 5-phosphate is bound by residues Gly223 and 244-245 (GS).

It belongs to the PdxS/SNZ family. As to quaternary structure, in the presence of PdxT, forms a dodecamer of heterodimers.

The catalysed reaction is aldehydo-D-ribose 5-phosphate + D-glyceraldehyde 3-phosphate + L-glutamine = pyridoxal 5'-phosphate + L-glutamate + phosphate + 3 H2O + H(+). The protein operates within cofactor biosynthesis; pyridoxal 5'-phosphate biosynthesis. Its function is as follows. Catalyzes the formation of pyridoxal 5'-phosphate from ribose 5-phosphate (RBP), glyceraldehyde 3-phosphate (G3P) and ammonia. The ammonia is provided by the PdxT subunit. Can also use ribulose 5-phosphate and dihydroxyacetone phosphate as substrates, resulting from enzyme-catalyzed isomerization of RBP and G3P, respectively. The polypeptide is Pyridoxal 5'-phosphate synthase subunit PdxS (Mycolicibacterium smegmatis (strain ATCC 700084 / mc(2)155) (Mycobacterium smegmatis)).